A 326-amino-acid chain; its full sequence is Delta-aminolevulinic acid dehydratase (326 aa).

Zn(2+) contacts are provided by cysteine 119, cysteine 121, and cysteine 129. The active-site Schiff-base intermediate with substrate is lysine 198. 5-aminolevulinate contacts are provided by arginine 208 and arginine 220. Mg(2+) is bound at residue glutamate 236. The active-site Schiff-base intermediate with substrate is lysine 251. Residues serine 277 and tyrosine 316 each contribute to the 5-aminolevulinate site.

It belongs to the ALAD family. As to quaternary structure, homooctamer. Zn(2+) is required as a cofactor.

It catalyses the reaction 2 5-aminolevulinate = porphobilinogen + 2 H2O + H(+). It functions in the pathway porphyrin-containing compound metabolism; protoporphyrin-IX biosynthesis; coproporphyrinogen-III from 5-aminolevulinate: step 1/4. Catalyzes an early step in the biosynthesis of tetrapyrroles. Binds two molecules of 5-aminolevulinate per subunit, each at a distinct site, and catalyzes their condensation to form porphobilinogen. This chain is Delta-aminolevulinic acid dehydratase (hemB), found in Synechococcus elongatus (strain ATCC 33912 / PCC 7942 / FACHB-805) (Anacystis nidulans R2).